A 296-amino-acid polypeptide reads, in one-letter code: Zinc finger protein 75A (296 aa).

The KRAB domain maps to 1-66 (MYFSQEEWEL…VSPEFKDSAG (66 aa)). 5 consecutive C2H2-type zinc fingers follow at residues 161-183 (FKCQECGKTFRVSSDLIKHQRIH), 189-211 (YKCQQCDKRFRWSSDLNKHLTTH), 217-239 (YKCSWCGKSFSQNTNLHTHQRTH), 245-267 (FTCHECGKKFSQNSHLIKHRRTH), and 273-295 (YTCSICRRNFSRRSSLLRHQKLH).

The protein belongs to the krueppel C2H2-type zinc-finger protein family.

The protein localises to the nucleus. Its function is as follows. May be involved in transcriptional regulation. In Homo sapiens (Human), this protein is Zinc finger protein 75A (ZNF75A).